The following is a 238-amino-acid chain: MRPTGRSAQQVRPLTFTRHYTKHAEGSVLVEFGDTKVLCNATVEEGVPRFLKGQGQGWVTAEYGMLPRATHSRNAREAAKGKQGGRTLEIQRLIARSLRAAIDLKVLGEYTITLDCDVLQADGGTRTASITGACVALADALNQMVANGKLKKNPMKGMVAAVSVGIVKGEALCDLEYVEDSAAETDMNVVMTEDGRMVEVQGTAEGEPFSHEELLTLLALARGGIDTIVQAQKAALAD.

Residues Arg-86 and 124 to 126 (GTR) contribute to the phosphate site.

It belongs to the RNase PH family. As to quaternary structure, homohexameric ring arranged as a trimer of dimers.

It carries out the reaction tRNA(n+1) + phosphate = tRNA(n) + a ribonucleoside 5'-diphosphate. In terms of biological role, phosphorolytic 3'-5' exoribonuclease that plays an important role in tRNA 3'-end maturation. Removes nucleotide residues following the 3'-CCA terminus of tRNAs; can also add nucleotides to the ends of RNA molecules by using nucleoside diphosphates as substrates, but this may not be physiologically important. Probably plays a role in initiation of 16S rRNA degradation (leading to ribosome degradation) during starvation. The protein is Ribonuclease PH of Pectobacterium atrosepticum (strain SCRI 1043 / ATCC BAA-672) (Erwinia carotovora subsp. atroseptica).